Consider the following 428-residue polypeptide: Putative zinc metalloprotease SA1105 (428 aa).

His-21 is a Zn(2+) binding site. Residue Glu-22 is part of the active site. His-25 contributes to the Zn(2+) binding site. 4 consecutive transmembrane segments (helical) span residues 172-194, 309-331, 352-374, and 401-420; these read FLTL…IGLA, GSTL…GFSF, IISL…LIPI, and TTII…LVTW. The 84-residue stretch at 186 to 269 folds into the PDZ domain; that stretch reads ALVLFIGLAY…TKSVELTPKK (84 aa).

Belongs to the peptidase M50B family. Requires Zn(2+) as cofactor.

It is found in the cell membrane. The polypeptide is Putative zinc metalloprotease SA1105 (Staphylococcus aureus (strain N315)).